Here is a 151-residue protein sequence, read N- to C-terminus: Epigen (151 aa).

Residues 1–18 (MAFGMLIYILLKAMGALS) form the signal peptide. Residues 19–108 (EEAALTASSL…NSYAHNSYER (90 aa)) are Extracellular-facing. Asparagine 39 carries N-linked (GlcNAc...) asparagine glycosylation. An EGF-like domain is found at 54-94 (LMQTCLEEHHSYCINGLCAFHSELRKPICKCLAGYNGERCE). Cystine bridges form between cysteine 58–cysteine 71, cysteine 66–cysteine 82, and cysteine 84–cysteine 93. Residues 109–129 (YIAVGIGIGILTSGILAIIYC) form a helical membrane-spanning segment. At 130–151 (YVRKRCRKLKSPYKVCMGETAL) the chain is on the cytoplasmic side.

It is found in the membrane. In terms of biological role, promotes the growth of epithelial cells. The chain is Epigen (EPGN) from Gallus gallus (Chicken).